Here is a 94-residue protein sequence, read N- to C-terminus: Putative RNA-binding protein RbpD (94 aa).

The 78-residue stretch at 2 to 79 (TIYVGNLSYR…RQLRVNKAKP (78 aa)) folds into the RRM domain. Residues 73–94 (RVNKAKPREDDRRGSWGKKQDY) are disordered. A compositionally biased stretch (basic and acidic residues) spans 78–94 (KPREDDRRGSWGKKQDY).

The protein is Putative RNA-binding protein RbpD (rbpD) of Nostoc sp. (strain PCC 7120 / SAG 25.82 / UTEX 2576).